Here is a 422-residue protein sequence, read N- to C-terminus: Phospho-N-acetylmuramoyl-pentapeptide-transferase (422 aa).

9 helical membrane-spanning segments follow: residues 28-48, 71-91, 95-115, 136-156, 208-228, 239-259, 279-299, 313-333, and 399-419; these read LMAIILSLLISAIFGEYFINL, VGVPTMGGIIIIVAILIPCLL, LHNIYMILMLITTIWLGTLGF, IIGQVGLGLIVGLTLYLSPSV, AQAVGWIIFVLVTIFVVTAVS, GMAAGNSAIIGLTLGILAYVS, LVIFICSFIGALIGFLWYNAF, IGGIIAVFAIIIHKELLIPIL, and KITVRFWIVTIVLAAITIITL.

Belongs to the glycosyltransferase 4 family. MraY subfamily. It depends on Mg(2+) as a cofactor.

Its subcellular location is the cell inner membrane. The enzyme catalyses UDP-N-acetyl-alpha-D-muramoyl-L-alanyl-gamma-D-glutamyl-meso-2,6-diaminopimeloyl-D-alanyl-D-alanine + di-trans,octa-cis-undecaprenyl phosphate = di-trans,octa-cis-undecaprenyl diphospho-N-acetyl-alpha-D-muramoyl-L-alanyl-D-glutamyl-meso-2,6-diaminopimeloyl-D-alanyl-D-alanine + UMP. It functions in the pathway cell wall biogenesis; peptidoglycan biosynthesis. In terms of biological role, catalyzes the initial step of the lipid cycle reactions in the biosynthesis of the cell wall peptidoglycan: transfers peptidoglycan precursor phospho-MurNAc-pentapeptide from UDP-MurNAc-pentapeptide onto the lipid carrier undecaprenyl phosphate, yielding undecaprenyl-pyrophosphoryl-MurNAc-pentapeptide, known as lipid I. The chain is Phospho-N-acetylmuramoyl-pentapeptide-transferase from Phocaeicola vulgatus (strain ATCC 8482 / DSM 1447 / JCM 5826 / CCUG 4940 / NBRC 14291 / NCTC 11154) (Bacteroides vulgatus).